The primary structure comprises 121 residues: N-alpha-acetyltransferase 38, NatC auxiliary subunit (121 aa).

Positions 40–113 (PGRRKLQKWL…IVSLSIDEPD (74 aa)) constitute a Sm domain.

This sequence belongs to the snRNP Sm proteins family. In terms of assembly, component of the N-terminal acetyltransferase C (NatC) complex, which is composed of Naa35, Sbat/Naa38 and Naa30A. Interacts with Smn and Hez; along with Hez and Vlet, may form an accessory subcomplex involved in SMN complex function.

It is found in the cytoplasm. It localises to the nucleus. Functionally, auxiliary component of the N-terminal acetyltransferase C (NatC) complex which catalyzes acetylation of N-terminal methionine residues. May have an accessory function in the survival motor neuron (SMN) complex. This is N-alpha-acetyltransferase 38, NatC auxiliary subunit from Drosophila melanogaster (Fruit fly).